The sequence spans 126 residues: Aspartate 1-decarboxylase (126 aa).

The active-site Schiff-base intermediate with substrate; via pyruvic acid is Ser-25. At Ser-25 the chain carries Pyruvic acid (Ser). Substrate is bound at residue Thr-57. Tyr-58 functions as the Proton donor in the catalytic mechanism. Residue 73 to 75 (GAA) coordinates substrate.

This sequence belongs to the PanD family. Heterooctamer of four alpha and four beta subunits. The cofactor is pyruvate. Post-translationally, is synthesized initially as an inactive proenzyme, which is activated by self-cleavage at a specific serine bond to produce a beta-subunit with a hydroxyl group at its C-terminus and an alpha-subunit with a pyruvoyl group at its N-terminus.

Its subcellular location is the cytoplasm. The enzyme catalyses L-aspartate + H(+) = beta-alanine + CO2. The protein operates within cofactor biosynthesis; (R)-pantothenate biosynthesis; beta-alanine from L-aspartate: step 1/1. Its function is as follows. Catalyzes the pyruvoyl-dependent decarboxylation of aspartate to produce beta-alanine. This Methylococcus capsulatus (strain ATCC 33009 / NCIMB 11132 / Bath) protein is Aspartate 1-decarboxylase.